Reading from the N-terminus, the 342-residue chain is L-threonine 3-dehydrogenase (342 aa).

Cys-38 serves as a coordination point for Zn(2+). Active-site charge relay system residues include Thr-40 and His-43. Zn(2+)-binding residues include His-63, Glu-64, Cys-93, Cys-96, Cys-99, and Cys-107. NAD(+)-binding positions include Ile-175, Asp-195, Arg-200, 262–264, and 286–287; these read LGL and IY.

The protein belongs to the zinc-containing alcohol dehydrogenase family. Homotetramer. The cofactor is Zn(2+).

It localises to the cytoplasm. The catalysed reaction is L-threonine + NAD(+) = (2S)-2-amino-3-oxobutanoate + NADH + H(+). It participates in amino-acid degradation; L-threonine degradation via oxydo-reductase pathway; glycine from L-threonine: step 1/2. Its function is as follows. Catalyzes the NAD(+)-dependent oxidation of L-threonine to 2-amino-3-ketobutyrate. This is L-threonine 3-dehydrogenase from Streptomyces avermitilis (strain ATCC 31267 / DSM 46492 / JCM 5070 / NBRC 14893 / NCIMB 12804 / NRRL 8165 / MA-4680).